The sequence spans 469 residues: Aspartyl/glutamyl-tRNA(Asn/Gln) amidotransferase subunit B (469 aa).

Belongs to the GatB/GatE family. GatB subfamily. As to quaternary structure, heterotrimer of A, B and C subunits.

The enzyme catalyses L-glutamyl-tRNA(Gln) + L-glutamine + ATP + H2O = L-glutaminyl-tRNA(Gln) + L-glutamate + ADP + phosphate + H(+). It carries out the reaction L-aspartyl-tRNA(Asn) + L-glutamine + ATP + H2O = L-asparaginyl-tRNA(Asn) + L-glutamate + ADP + phosphate + 2 H(+). Allows the formation of correctly charged Asn-tRNA(Asn) or Gln-tRNA(Gln) through the transamidation of misacylated Asp-tRNA(Asn) or Glu-tRNA(Gln) in organisms which lack either or both of asparaginyl-tRNA or glutaminyl-tRNA synthetases. The reaction takes place in the presence of glutamine and ATP through an activated phospho-Asp-tRNA(Asn) or phospho-Glu-tRNA(Gln). This is Aspartyl/glutamyl-tRNA(Asn/Gln) amidotransferase subunit B from Thermus thermophilus (strain ATCC 27634 / DSM 579 / HB8).